The chain runs to 230 residues: MDAALVSELRARYGIEFNNLALLDEAFTHSSYVNEHRELGLRDNERLEFLGDAVMEITVSEYLYKKYPDWPEGKLTRLRAAIVCTKSFSSFSKEAHFDRYIRLGKGEEKNGARARATLLEDLFEAFNGALFLDQGRDAVVDFVSQVIFPKIEAGEFSDQTDYKTNLQEFLQQDGEIEIDYQLLAEVGPSHDRQFEVDVLVGDRVLGSGVGRNKKAAEQAAAKKALEQLKA.

Residues 6–135 (VSELRARYGI…FNGALFLDQG (130 aa)) form the RNase III domain. Mg(2+) is bound at residue glutamate 48. Aspartate 52 is a catalytic residue. Positions 121 and 124 each coordinate Mg(2+). Glutamate 124 is an active-site residue. One can recognise a DRBM domain in the interval 161 to 230 (DYKTNLQEFL…AKKALEQLKA (70 aa)).

It belongs to the ribonuclease III family. In terms of assembly, homodimer. It depends on Mg(2+) as a cofactor.

The protein localises to the cytoplasm. It catalyses the reaction Endonucleolytic cleavage to 5'-phosphomonoester.. Functionally, digests double-stranded RNA. Involved in the processing of primary rRNA transcript to yield the immediate precursors to the large and small rRNAs (23S and 16S). Processes some mRNAs, and tRNAs when they are encoded in the rRNA operon. Processes pre-crRNA and tracrRNA of type II CRISPR loci if present in the organism. The polypeptide is Ribonuclease 3 (Latilactobacillus sakei subsp. sakei (strain 23K) (Lactobacillus sakei subsp. sakei)).